The following is a 296-amino-acid chain: MPVDTLSPGAPATPALPFRLRTKVPGYLLPRPADGGARKPSAVERLEADKAKYVKSLRVANTRQEPVQPPLVRQPLFSPGPRGPVLTPSRRVLPCSGRRPQLDLDILSSLINLCDSPVSPSEASRTPGRPEGSAHKVPPATPPRPPPSTVAVRRVDVRPLPASPARPYPSPGTTTTSSPGRPPGLQRSKSDLSERFSRAAADLERFFNFCGLDPEEARGLGVAHLARASSDIVSLAGPSAGPCSSEGGCSRRSSATVEERSLDRVPYGVSVIERNARVIKWLYGLRQARDPPTTEG.

Disordered regions lie at residues 61 to 97 (NTRQ…PCSG) and 117 to 192 (PVSP…KSDL). Pro residues-rich tracts occupy residues 139–148 (PATPPRPPPS) and 161–170 (PASPARPYPS).

The protein belongs to the FAM110 family. May interact with CSPP1.

It localises to the cytoplasm. Its subcellular location is the cytoskeleton. The protein localises to the microtubule organizing center. It is found in the centrosome. The protein resides in the spindle pole. This chain is Protein FAM110A (Fam110a), found in Mus musculus (Mouse).